A 139-amino-acid chain; its full sequence is D-ribose pyranase (139 aa).

Catalysis depends on histidine 20, which acts as the Proton donor. Residues aspartate 28, histidine 106, and 128 to 130 each bind substrate; that span reads YAN.

Belongs to the RbsD / FucU family. RbsD subfamily. In terms of assembly, homodecamer.

The protein resides in the cytoplasm. The catalysed reaction is beta-D-ribopyranose = beta-D-ribofuranose. It functions in the pathway carbohydrate metabolism; D-ribose degradation; D-ribose 5-phosphate from beta-D-ribopyranose: step 1/2. In terms of biological role, catalyzes the interconversion of beta-pyran and beta-furan forms of D-ribose. The protein is D-ribose pyranase of Vibrio cholerae serotype O1 (strain ATCC 39541 / Classical Ogawa 395 / O395).